Reading from the N-terminus, the 586-residue chain is Phosphomethylpyrimidine synthase (586 aa).

The disordered stretch occupies residues 1–58; it reads MKQSVSAEQIELKSSLPGSKKVYVDGTREGMKVPMREIEQSDTNGVQNPPIRVYDTSG. Residues 22–39 are compositionally biased toward basic and acidic residues; that stretch reads VYVDGTREGMKVPMREIE. Substrate-binding positions include Asn193, Met222, Tyr251, His287, 307 to 309, 348 to 351, and Glu387; these read SRG and DGLR. Residue His391 coordinates Zn(2+). Tyr414 lines the substrate pocket. His455 contributes to the Zn(2+) binding site. [4Fe-4S] cluster-binding residues include Cys535, Cys538, and Cys543.

Belongs to the ThiC family. [4Fe-4S] cluster serves as cofactor.

The enzyme catalyses 5-amino-1-(5-phospho-beta-D-ribosyl)imidazole + S-adenosyl-L-methionine = 4-amino-2-methyl-5-(phosphooxymethyl)pyrimidine + CO + 5'-deoxyadenosine + formate + L-methionine + 3 H(+). The protein operates within cofactor biosynthesis; thiamine diphosphate biosynthesis. Its function is as follows. Catalyzes the synthesis of the hydroxymethylpyrimidine phosphate (HMP-P) moiety of thiamine from aminoimidazole ribotide (AIR) in a radical S-adenosyl-L-methionine (SAM)-dependent reaction. This is Phosphomethylpyrimidine synthase from Bacillus mycoides (strain KBAB4) (Bacillus weihenstephanensis).